We begin with the raw amino-acid sequence, 412 residues long: Transcription factor NIGT1 (412 aa).

3 disordered regions span residues 54 to 241 (MDAA…RCWA), 286 to 310 (KYRL…PAPP), and 358 to 412 (AMLP…TTSA). The span at 90 to 112 (ESTHADAAKSGKKEEAETSERHS) shows a compositional bias: basic and acidic residues. Residues 183–193 (ASSTTAAASST) are compositionally biased toward low complexity. A compositionally biased stretch (basic and acidic residues) spans 198–228 (SGDKPTDDDTEKHMETDKDNDKDAKDKDKEG). The region spanning 232 to 292 (PHRKPRRCWA…HLQKYRLHTR (61 aa)) is the HTH myb-type domain. Residues 263–288 (PKQIRELMKVDGLTNDEVKSHLQKYR) constitute a DNA-binding region (H-T-H motif). A compositionally biased stretch (basic and acidic residues) spans 383–392 (SGSEGRRSGD). Low complexity predominate over residues 395-412 (DGSSSSPAVSSSSQTTSA).

It is found in the nucleus. Its function is as follows. Transcriptional repressor that may play a role in response to nitrogen. May be involved in a time-dependent signaling for transcriptional regulation of nitrate-responsive genes. Binds specifically to the DNA sequence motif 5'-GAATC-3' or 5'-GAATATTC-3'. Represses the activity of its own promoter trough binding to these motifs. The chain is Transcription factor NIGT1 from Oryza sativa subsp. japonica (Rice).